The following is an 82-amino-acid chain: Large ribosomal subunit protein bL31B-2 (82 aa).

It belongs to the bacterial ribosomal protein bL31 family. Type B subfamily. In terms of assembly, part of the 50S ribosomal subunit.

This chain is Large ribosomal subunit protein bL31B-2, found in Streptomyces avermitilis (strain ATCC 31267 / DSM 46492 / JCM 5070 / NBRC 14893 / NCIMB 12804 / NRRL 8165 / MA-4680).